A 283-amino-acid polypeptide reads, in one-letter code: Pantothenate synthetase (283 aa).

34–41 lines the ATP pocket; it reads MGALHDGH. Residue histidine 41 is the Proton donor of the active site. Glutamine 65 is a (R)-pantoate binding site. Glutamine 65 contacts beta-alanine. 152–155 is a binding site for ATP; sequence GSKD. Glutamine 158 provides a ligand contact to (R)-pantoate. ATP contacts are provided by residues isoleucine 181 and 189–192; that span reads MSSR.

It belongs to the pantothenate synthetase family. As to quaternary structure, homodimer.

Its subcellular location is the cytoplasm. It carries out the reaction (R)-pantoate + beta-alanine + ATP = (R)-pantothenate + AMP + diphosphate + H(+). The protein operates within cofactor biosynthesis; (R)-pantothenate biosynthesis; (R)-pantothenate from (R)-pantoate and beta-alanine: step 1/1. In terms of biological role, catalyzes the condensation of pantoate with beta-alanine in an ATP-dependent reaction via a pantoyl-adenylate intermediate. This is Pantothenate synthetase from Rhodopseudomonas palustris (strain HaA2).